Consider the following 115-residue polypeptide: Large ribosomal subunit protein bL20 (115 aa).

It belongs to the bacterial ribosomal protein bL20 family.

Binds directly to 23S ribosomal RNA and is necessary for the in vitro assembly process of the 50S ribosomal subunit. It is not involved in the protein synthesizing functions of that subunit. In Salinibacter ruber (strain DSM 13855 / M31), this protein is Large ribosomal subunit protein bL20.